A 167-amino-acid polypeptide reads, in one-letter code: Peroxiredoxin Pen c 3 (167 aa).

Residues 3–167 form the Thioredoxin domain; sequence LKAGDSFPEG…SRADHVLKQL (165 aa). The Cysteine sulfenic acid (-SOH) intermediate role is filled by Cys-60.

The protein belongs to the peroxiredoxin family. Prx5 subfamily. Homodimer; disulfide-linked, upon oxidation.

The enzyme catalyses a hydroperoxide + [thioredoxin]-dithiol = an alcohol + [thioredoxin]-disulfide + H2O. Thiol-specific peroxidase that catalyzes the reduction of hydrogen peroxide and organic hydroperoxides to water and alcohols, respectively. Plays a role in cell protection against oxidative stress by detoxifying peroxides and as sensor of hydrogen peroxide-mediated signaling events. The protein is Peroxiredoxin Pen c 3 of Penicillium citrinum.